We begin with the raw amino-acid sequence, 699 residues long: Elongation factor G (699 aa).

The tr-type G domain maps to 8-288; the sequence is EDYRNFGIMA…AVCEYLPSPL (281 aa). GTP-binding positions include 17-24, 86-90, and 140-143; these read AHIDAGKT, DTPGH, and NKMD.

Belongs to the TRAFAC class translation factor GTPase superfamily. Classic translation factor GTPase family. EF-G/EF-2 subfamily.

It is found in the cytoplasm. Its function is as follows. Catalyzes the GTP-dependent ribosomal translocation step during translation elongation. During this step, the ribosome changes from the pre-translocational (PRE) to the post-translocational (POST) state as the newly formed A-site-bound peptidyl-tRNA and P-site-bound deacylated tRNA move to the P and E sites, respectively. Catalyzes the coordinated movement of the two tRNA molecules, the mRNA and conformational changes in the ribosome. This Allorhizobium ampelinum (strain ATCC BAA-846 / DSM 112012 / S4) (Agrobacterium vitis (strain S4)) protein is Elongation factor G.